A 406-amino-acid chain; its full sequence is Phosphopentomutase (406 aa).

Asp10, Asp305, His310, Asp346, His347, and His358 together coordinate Mn(2+).

The protein belongs to the phosphopentomutase family. Mn(2+) is required as a cofactor.

It localises to the cytoplasm. It carries out the reaction 2-deoxy-alpha-D-ribose 1-phosphate = 2-deoxy-D-ribose 5-phosphate. The catalysed reaction is alpha-D-ribose 1-phosphate = D-ribose 5-phosphate. It participates in carbohydrate degradation; 2-deoxy-D-ribose 1-phosphate degradation; D-glyceraldehyde 3-phosphate and acetaldehyde from 2-deoxy-alpha-D-ribose 1-phosphate: step 1/2. Its function is as follows. Isomerase that catalyzes the conversion of deoxy-ribose 1-phosphate (dRib-1-P) and ribose 1-phosphate (Rib-1-P) to deoxy-ribose 5-phosphate (dRib-5-P) and ribose 5-phosphate (Rib-5-P), respectively. The chain is Phosphopentomutase from Sinorhizobium fredii (strain NBRC 101917 / NGR234).